A 251-amino-acid polypeptide reads, in one-letter code: Transcription initiation factor TFIID subunit 9B (251 aa).

M1 is subject to N-acetylmethionine. S147 is modified (phosphoserine). Phosphothreonine occurs at positions 159 and 174. S177 carries the post-translational modification Phosphoserine. The disordered stretch occupies residues 229-251; sequence QNTANEANPLKRKHEDDDDNDIM.

Belongs to the TAF9 family. As to quaternary structure, binds TAF5 and TAF6. Component of TFIID and the TATA-binding protein-free TAF complex (TFTC). TFIID is composed of TATA binding protein (TBP) and a number of TBP-associated factors (TAFs). Binds N-terminal domain of p53/TP53 which is essential for transcription.

It is found in the nucleus. Its function is as follows. Essential for cell viability. TAF9 and TAF9B are involved in transcriptional activation as well as repression of distinct but overlapping sets of genes. May have a role in gene regulation associated with apoptosis. TAFs are components of the transcription factor IID (TFIID) complex, the TBP-free TAFII complex (TFTC), the PCAF histone acetylase complex and the STAGA transcription coactivator-HAT complex. TFIID or TFTC are essential for the regulation of RNA polymerase II-mediated transcription. The sequence is that of Transcription initiation factor TFIID subunit 9B (TAF9B) from Homo sapiens (Human).